The primary structure comprises 101 residues: MGTAELKIILEFSAGAELLFGNIKRRQLALDGTKKWNIANLLKWMHANILTERPELFLQGDTVRPGILVLINDTDWELLGELDYELQPNDNVLFISTLHGG.

Residue Gly101 is modified to 1-thioglycine. A Glycyl lysine isopeptide (Gly-Lys) (interchain with K-? in acceptor proteins) cross-link involves residue Gly101.

It belongs to the URM1 family. Interacts with cer. Post-translationally, C-terminal thiocarboxylation occurs in 2 steps, it is first acyl-adenylated (-COAMP) via the hesA/moeB/thiF part of the MOCS3 homolog, then thiocarboxylated (-COSH) via the rhodanese domain of the MOCS3 homolog.

The protein localises to the cytoplasm. The protein operates within tRNA modification; 5-methoxycarbonylmethyl-2-thiouridine-tRNA biosynthesis. Its function is as follows. Acts as a sulfur carrier required for 2-thiolation of mcm(5)S(2)U at tRNA wobble positions of cytosolic tRNA(Lys), tRNA(Glu) and tRNA(Gln). Serves as sulfur donor in tRNA 2-thiolation reaction by being thiocarboxylated (-COSH) at its C-terminus by MOCS3. The sulfur is then transferred to tRNA to form 2-thiolation of mcm(5)S(2)U. Also acts as a ubiquitin-like protein (UBL) that is covalently conjugated via an isopeptide bond to lysine residues of target proteins such as Prx2/Jafrac1, Ciao1, Eip71CD and GILT1. The thiocarboxylated form serves as substrate for conjugation and oxidative stress specifically induces the formation of UBL-protein conjugates. The polypeptide is Ubiquitin-related modifier 1 homolog (Drosophila ananassae (Fruit fly)).